The sequence spans 56 residues: Large ribosomal subunit protein bL33 (56 aa).

This sequence belongs to the bacterial ribosomal protein bL33 family.

This Treponema denticola (strain ATCC 35405 / DSM 14222 / CIP 103919 / JCM 8153 / KCTC 15104) protein is Large ribosomal subunit protein bL33.